Reading from the N-terminus, the 132-residue chain is uncharacterized protein (132 aa).

The next 2 helical transmembrane spans lie at 12–32 (VIGFVVLFCVLELVFYLKKLY) and 37–57 (LTLAVFGIFSLLFFLLYIPVL).

The protein resides in the cell membrane. This is an uncharacterized protein from Methanocaldococcus jannaschii (strain ATCC 43067 / DSM 2661 / JAL-1 / JCM 10045 / NBRC 100440) (Methanococcus jannaschii).